Reading from the N-terminus, the 874-residue chain is Alanine--tRNA ligase (874 aa).

The Zn(2+) site is built by His-561, His-565, Cys-663, and His-667.

It belongs to the class-II aminoacyl-tRNA synthetase family. Zn(2+) serves as cofactor.

The protein resides in the cytoplasm. The catalysed reaction is tRNA(Ala) + L-alanine + ATP = L-alanyl-tRNA(Ala) + AMP + diphosphate. Its function is as follows. Catalyzes the attachment of alanine to tRNA(Ala) in a two-step reaction: alanine is first activated by ATP to form Ala-AMP and then transferred to the acceptor end of tRNA(Ala). Also edits incorrectly charged Ser-tRNA(Ala) and Gly-tRNA(Ala) via its editing domain. The protein is Alanine--tRNA ligase of Trichodesmium erythraeum (strain IMS101).